The following is a 950-amino-acid chain: Protocadherin alpha-6 (950 aa).

The signal sequence occupies residues 1–29 (MVFTPEDRLGKQCLLLPLLLLAAWKVGSG). At 30–697 (QLHYSVPEEA…GPEAALVDVN (668 aa)) the chain is on the extracellular side. 6 consecutive Cadherin domains span residues 34-133 (SVPE…PPLF), 157-242 (ASDA…APTF), 243-350 (EQSE…VPEI), 351-455 (ALTS…APAF), 456-565 (AQPE…APAL), and 581-678 (VPRS…APKA). N-linked (GlcNAc...) asparagine glycosylation is found at Asn257, Asn265, Asn386, and Asn548. Residues 698–718 (VYLIIAICAVSSLLVLTLLLY) form a helical membrane-spanning segment. At 719–950 (TALRCSAPPT…GNSTTDNSDQ (232 aa)) the chain is on the cytoplasmic side. PXXP repeat units follow at residues 799–802 (PRQP), 832–835 (PGGP), 873–876 (PGNP), and 891–894 (PGSP). The 4 X 4 AA repeats of P-X-X-P stretch occupies residues 799-894 (PRQPNPDWRY…PDKFIIPGSP (96 aa)). Positions 830 to 950 (AGPGGPDQQW…GNSTTDNSDQ (121 aa)) are disordered. Residues 909-923 (DKSDFITFGKKEETK) are compositionally biased toward basic and acidic residues.

The protein localises to the cell membrane. It is found in the secreted. Its function is as follows. Potential calcium-dependent cell-adhesion protein. May be involved in the establishment and maintenance of specific neuronal connections in the brain. The protein is Protocadherin alpha-6 (PCDHA6) of Homo sapiens (Human).